We begin with the raw amino-acid sequence, 488 residues long: Probable cytosol aminopeptidase (488 aa).

Mn(2+)-binding residues include Lys251 and Asp256. Lys263 is an active-site residue. 3 residues coordinate Mn(2+): Asp274, Asp333, and Glu335. The active site involves Arg337.

The protein belongs to the peptidase M17 family. It depends on Mn(2+) as a cofactor.

It localises to the cytoplasm. The catalysed reaction is Release of an N-terminal amino acid, Xaa-|-Yaa-, in which Xaa is preferably Leu, but may be other amino acids including Pro although not Arg or Lys, and Yaa may be Pro. Amino acid amides and methyl esters are also readily hydrolyzed, but rates on arylamides are exceedingly low.. It catalyses the reaction Release of an N-terminal amino acid, preferentially leucine, but not glutamic or aspartic acids.. In terms of biological role, presumably involved in the processing and regular turnover of intracellular proteins. Catalyzes the removal of unsubstituted N-terminal amino acids from various peptides. The chain is Probable cytosol aminopeptidase from Cenarchaeum symbiosum (strain A).